Consider the following 194-residue polypeptide: Ribosomal RNA small subunit methyltransferase G (194 aa).

S-adenosyl-L-methionine is bound by residues Gly-70, Tyr-75, 121–122 (VE), and Arg-135.

This sequence belongs to the methyltransferase superfamily. RNA methyltransferase RsmG family.

The protein localises to the cytoplasm. The enzyme catalyses guanosine(527) in 16S rRNA + S-adenosyl-L-methionine = N(7)-methylguanosine(527) in 16S rRNA + S-adenosyl-L-homocysteine. Specifically methylates the N7 position of guanine in position 527 of 16S rRNA. This is Ribosomal RNA small subunit methyltransferase G from Aliarcobacter butzleri (strain RM4018) (Arcobacter butzleri).